Here is a 345-residue protein sequence, read N- to C-terminus: NADH-ubiquinone oxidoreductase chain 2 (345 aa).

Transmembrane regions (helical) follow at residues 1–21, 25–45, 56–76, 92–114, 149–171, 178–198, 200–220, 241–261, 274–294, and 324–344; these read MNPI…VITM, NLML…PMLI, ATKY…AIVL, GLIL…FHFW, LNST…GGLN, IMAY…PYNP, LTLL…MALM, LTMI…TGFL, NCLI…FFYT, and LMFS…PQLI.

It belongs to the complex I subunit 2 family. As to quaternary structure, core subunit of respiratory chain NADH dehydrogenase (Complex I) which is composed of 45 different subunits. Interacts with TMEM242.

The protein resides in the mitochondrion inner membrane. It carries out the reaction a ubiquinone + NADH + 5 H(+)(in) = a ubiquinol + NAD(+) + 4 H(+)(out). In terms of biological role, core subunit of the mitochondrial membrane respiratory chain NADH dehydrogenase (Complex I) which catalyzes electron transfer from NADH through the respiratory chain, using ubiquinone as an electron acceptor. Essential for the catalytic activity and assembly of complex I. This Mus musculus (Mouse) protein is NADH-ubiquinone oxidoreductase chain 2.